The primary structure comprises 201 residues: Imidazole glycerol phosphate synthase subunit HisH (201 aa).

One can recognise a Glutamine amidotransferase type-1 domain in the interval 1–201 (MVFIADYGAG…LKVLANFAEL (201 aa)). The active-site Nucleophile is the C79. Active-site residues include H183 and E185.

Heterodimer of HisH and HisF.

Its subcellular location is the cytoplasm. It catalyses the reaction 5-[(5-phospho-1-deoxy-D-ribulos-1-ylimino)methylamino]-1-(5-phospho-beta-D-ribosyl)imidazole-4-carboxamide + L-glutamine = D-erythro-1-(imidazol-4-yl)glycerol 3-phosphate + 5-amino-1-(5-phospho-beta-D-ribosyl)imidazole-4-carboxamide + L-glutamate + H(+). It carries out the reaction L-glutamine + H2O = L-glutamate + NH4(+). The protein operates within amino-acid biosynthesis; L-histidine biosynthesis; L-histidine from 5-phospho-alpha-D-ribose 1-diphosphate: step 5/9. Functionally, IGPS catalyzes the conversion of PRFAR and glutamine to IGP, AICAR and glutamate. The HisH subunit catalyzes the hydrolysis of glutamine to glutamate and ammonia as part of the synthesis of IGP and AICAR. The resulting ammonia molecule is channeled to the active site of HisF. In Chlorobium chlorochromatii (strain CaD3), this protein is Imidazole glycerol phosphate synthase subunit HisH.